Reading from the N-terminus, the 240-residue chain is MLNLSMKDMIQSGVHFGHQTRYWNPNMKPFIFCKKNKVHIINLEKTLIMFEIAMNELSKISKRDGKILFIGTKRAASEAIKNSAINCNQFFVNYRWLGGMLTNWKTVRQSIKRLKELESQSKDGTFKKLTKKEALIRTRTLNKLENSLGGIKNMGGLPDAIFVIDVEHEKTSIKEANKLGIPIFAIVDTNSNPKDIKFVIPGNDDSIRAIDLYLKTVSETIKNSKISNKEINKKIIIKNN.

The protein belongs to the universal ribosomal protein uS2 family.

This chain is Small ribosomal subunit protein uS2, found in Wigglesworthia glossinidia brevipalpis.